The chain runs to 245 residues: Small ribosomal subunit protein uS2 (245 aa).

It belongs to the universal ribosomal protein uS2 family.

In Pseudomonas fluorescens (strain Pf0-1), this protein is Small ribosomal subunit protein uS2.